We begin with the raw amino-acid sequence, 608 residues long: Tyrosyl-DNA phosphodiesterase 1 (608 aa).

Residues 1 to 101 (MSQEGDYGRW…SDDELQPEMP (101 aa)) are disordered. Ser-61 is subject to Phosphoserine. Thr-147 is subject to Phosphothreonine. Residue Ser-148 is modified to Phosphoserine. His-263 (nucleophile) is an active-site residue. Position 265 (Lys-265) interacts with substrate. The segment at 400-403 (SVGS) is interaction with DNA. The active-site Proton donor/acceptor is His-493. Residue Lys-495 coordinates substrate.

This sequence belongs to the tyrosyl-DNA phosphodiesterase family. Monomer. Phosphorylated on serine and/or threonine residues, but not on tyrosine residues. In terms of tissue distribution, ubiquitously expressed. Similar expression throughout the central nervous system (whole brain, amygdala, caudate nucleus, cerebellum, cerebral cortex, frontal lobe, hippocampus, medulla oblongata, occipital lobe, putamen, substantia nigra, temporal lobe, thalamus, nucleus accumbens and spinal cord) and increased expression in testis and thymus.

Its subcellular location is the nucleus. It is found in the cytoplasm. Functionally, DNA repair enzyme that can remove a variety of covalent adducts from DNA through hydrolysis of a 3'-phosphodiester bond, giving rise to DNA with a free 3' phosphate. Catalyzes the hydrolysis of dead-end complexes between DNA and the topoisomerase I active site tyrosine residue. Hydrolyzes 3'-phosphoglycolates on protruding 3' ends on DNA double-strand breaks due to DNA damage by radiation and free radicals. Acts on blunt-ended double-strand DNA breaks and on single-stranded DNA. Has low 3'exonuclease activity and can remove a single nucleoside from the 3'end of DNA and RNA molecules with 3'hydroxyl groups. Has no exonuclease activity towards DNA or RNA with a 3'phosphate. This chain is Tyrosyl-DNA phosphodiesterase 1 (TDP1), found in Homo sapiens (Human).